We begin with the raw amino-acid sequence, 84 residues long: Small ribosomal subunit protein bS16 (84 aa).

Belongs to the bacterial ribosomal protein bS16 family.

The sequence is that of Small ribosomal subunit protein bS16 from Desulforapulum autotrophicum (strain ATCC 43914 / DSM 3382 / VKM B-1955 / HRM2) (Desulfobacterium autotrophicum).